The following is a 98-amino-acid chain: RNA-binding protein Hfq (98 aa).

Positions 11-71 (DVFLNHVRRS…ISTVMPATPV (61 aa)) constitute a Sm domain.

It belongs to the Hfq family. As to quaternary structure, homohexamer.

RNA chaperone that binds small regulatory RNA (sRNAs) and mRNAs to facilitate mRNA translational regulation in response to envelope stress, environmental stress and changes in metabolite concentrations. Also binds with high specificity to tRNAs. This chain is RNA-binding protein Hfq, found in Gluconacetobacter diazotrophicus (strain ATCC 49037 / DSM 5601 / CCUG 37298 / CIP 103539 / LMG 7603 / PAl5).